The chain runs to 388 residues: MSLDINWSLLSQPDESATDQLSESLIALLNAQLAEAHRPSFIGPITVTAFDFGNAGPDLEVKDIRDVWRVFDQGDDEGDFAEEEKQREKEREERDKLRNEALKSSLDGERYELVDRYSSTEGTSSFEYQPEYDIHEQHGDDYRIRGRRPLSYTFGYPHDRLAVHRSSSSRSFIPFPFDHPPPALHIPSTPGLNPSLVSHPISARFSRRPMSIAASAAPRPTPRRRPIEPSSTSPSPPAHPAGLPPKVSSSSIPSLQLHLRLSHASDLHLTLLTSLQVNYPSALFMALPLKLSITGFQLNADIVMAYSGEKNRVHLTIVDDESNPAHKEDKQIPLGQRLLSNLQIESEIGHADAHVLRNVGKVERFIVDVVRKTLVDELVFPNFHTVAL.

An SMP-LTD domain is found at 1–388; sequence MSLDINWSLL…VFPNFHTVAL (388 aa). 2 disordered regions span residues 75 to 101 and 209 to 249; these read DDEG…RNEA and PMSI…KVSS. Basic and acidic residues predominate over residues 83–101; that stretch reads EEKQREKEREERDKLRNEA. The span at 234–243 shows a compositional bias: pro residues; sequence PSPPAHPAGL.

Belongs to the MDM12 family. As to quaternary structure, component of the ER-mitochondria encounter structure (ERMES) or MDM complex, composed of MMM1, MDM10, MDM12 and MDM34. An MMM1 homodimer associates with one molecule of MDM12 on each side in a pairwise head-to-tail manner, and the SMP-LTD domains of MMM1 and MDM12 generate a continuous hydrophobic tunnel for phospholipid trafficking.

The protein resides in the mitochondrion outer membrane. The protein localises to the endoplasmic reticulum membrane. In terms of biological role, component of the ERMES/MDM complex, which serves as a molecular tether to connect the endoplasmic reticulum (ER) and mitochondria. Components of this complex are involved in the control of mitochondrial shape and protein biogenesis, and function in nonvesicular lipid trafficking between the ER and mitochondria. MDM12 is required for the interaction of the ER-resident membrane protein MMM1 and the outer mitochondrial membrane-resident beta-barrel protein MDM10. The MDM12-MMM1 subcomplex functions in the major beta-barrel assembly pathway that is responsible for biogenesis of all mitochondrial outer membrane beta-barrel proteins, and acts in a late step after the SAM complex. The MDM10-MDM12-MMM1 subcomplex further acts in the TOM40-specific pathway after the action of the MDM12-MMM1 complex. Essential for establishing and maintaining the structure of mitochondria and maintenance of mtDNA nucleoids. The chain is Mitochondrial distribution and morphology protein 12 from Cryptococcus neoformans var. neoformans serotype D (strain JEC21 / ATCC MYA-565) (Filobasidiella neoformans).